The primary structure comprises 114 residues: Nucleoid-associated protein CKL_3826 (114 aa).

The protein belongs to the YbaB/EbfC family. In terms of assembly, homodimer.

It is found in the cytoplasm. It localises to the nucleoid. Functionally, binds to DNA and alters its conformation. May be involved in regulation of gene expression, nucleoid organization and DNA protection. This is Nucleoid-associated protein CKL_3826 from Clostridium kluyveri (strain ATCC 8527 / DSM 555 / NBRC 12016 / NCIMB 10680 / K1).